A 64-amino-acid chain; its full sequence is uncharacterized protein (64 aa).

The segment at 35-64 (TIRKPPIEHAAGPLGSTSRAGHRSYGGVAS) is disordered.

This is an uncharacterized protein from Mycobacterium tuberculosis (strain ATCC 25618 / H37Rv).